The primary structure comprises 1010 residues: Lysosomal alpha-mannosidase (1010 aa).

The first 22 residues, 1-22, serve as a signal peptide directing secretion; the sequence is MVIKKLFILIFCLFLIINEING. Positions 23–40 are cleaved as a propeptide — pro I; that stretch reads KKTKINDIKKSKPKLSST. Residues H51 and D53 each coordinate Zn(2+). N68 is a glycosylation site (N-linked (GlcNAc...) asparagine). Zn(2+)-binding residues include D173 and H420. D173 functions as the Nucleophile in the catalytic mechanism. Residues N480, N520, N528, N539, N623, N760, N784, N828, N954, and N963 are each glycosylated (N-linked (GlcNAc...) asparagine). A propeptide spans 508 to 595 (pro II); sequence RNEPVRIPIP…GGGKINEKVS (88 aa).

Belongs to the glycosyl hydrolase 38 family. Tetramer of equimolar amounts of 60 and 58 kDa subunits. The cofactor is Zn(2+). Post-translationally, first cleaved into the mature 58 kDa subunit and an intermediate 82 kDa subunit. The latter is then cleaved to its mature 60 kDa subunit form. These events occur in multiple intracellular compartments. The 60 kDa subunit may form one or more intramolecular disulfide bonds.

The protein resides in the lysosome. It carries out the reaction Hydrolysis of terminal, non-reducing alpha-D-mannose residues in alpha-D-mannosides.. The chain is Lysosomal alpha-mannosidase (manA) from Dictyostelium discoideum (Social amoeba).